Here is a 415-residue protein sequence, read N- to C-terminus: Serine hydroxymethyltransferase (415 aa).

Basic and acidic residues predominate over residues 1-10 (MERSHIRDVD). A disordered region spans residues 1-21 (MERSHIRDVDPDAADALSSER). (6S)-5,6,7,8-tetrahydrofolate is bound by residues L119 and 123–125 (GHL). Position 228 is an N6-(pyridoxal phosphate)lysine (K228). 353–355 (SAF) lines the (6S)-5,6,7,8-tetrahydrofolate pocket.

This sequence belongs to the SHMT family. In terms of assembly, homodimer. It depends on pyridoxal 5'-phosphate as a cofactor.

It localises to the cytoplasm. It catalyses the reaction (6R)-5,10-methylene-5,6,7,8-tetrahydrofolate + glycine + H2O = (6S)-5,6,7,8-tetrahydrofolate + L-serine. Its pathway is one-carbon metabolism; tetrahydrofolate interconversion. The protein operates within amino-acid biosynthesis; glycine biosynthesis; glycine from L-serine: step 1/1. Functionally, catalyzes the reversible interconversion of serine and glycine with tetrahydrofolate (THF) serving as the one-carbon carrier. Also exhibits THF-independent aldolase activity toward beta-hydroxyamino acids, producing glycine and aldehydes, via a retro-aldol mechanism. This is Serine hydroxymethyltransferase from Haloquadratum walsbyi (strain DSM 16790 / HBSQ001).